Reading from the N-terminus, the 172-residue chain is Large ribosomal subunit protein uL10 (172 aa).

The protein belongs to the universal ribosomal protein uL10 family. As to quaternary structure, part of the ribosomal stalk of the 50S ribosomal subunit. The N-terminus interacts with L11 and the large rRNA to form the base of the stalk. The C-terminus forms an elongated spine to which L12 dimers bind in a sequential fashion forming a multimeric L10(L12)X complex.

Functionally, forms part of the ribosomal stalk, playing a central role in the interaction of the ribosome with GTP-bound translation factors. This is Large ribosomal subunit protein uL10 from Chlamydia trachomatis serovar A (strain ATCC VR-571B / DSM 19440 / HAR-13).